The sequence spans 327 residues: 4-hydroxy-2-oxoglutarate aldolase, mitochondrial (327 aa).

A mitochondrion-targeting transit peptide spans 1–25; it reads MLVPRVWSSVRLGLSRVLSRTLRGW. Substrate is bound at residue 77–78; it reads SN. The active-site Schiff-base intermediate with substrate is the K196. Positions 198 and 222 each coordinate substrate.

This sequence belongs to the DapA family. Homotetramer.

The protein resides in the mitochondrion. It catalyses the reaction (4S)-4-hydroxy-2-oxoglutarate = glyoxylate + pyruvate. It carries out the reaction (4R)-4-hydroxy-2-oxoglutarate = glyoxylate + pyruvate. Inhibited by divalent cations. Functionally, catalyzes the final step in the metabolic pathway of hydroxyproline. This is 4-hydroxy-2-oxoglutarate aldolase, mitochondrial (HOGA1) from Bos taurus (Bovine).